We begin with the raw amino-acid sequence, 272 residues long: ATP synthase subunit a (272 aa).

The next 6 membrane-spanning stretches (helical) occupy residues 41–61 (VLNI…LSIF), 110–130 (FVWV…FPFI), 143–165 (VPSA…ILFY), 188–208 (VFFI…PISL), 222–242 (IFIL…NVPW), and 243–263 (AIFH…LTIV).

The protein belongs to the ATPase A chain family. As to quaternary structure, F-type ATPases have 2 components, CF(1) - the catalytic core - and CF(0) - the membrane proton channel. CF(1) has five subunits: alpha(3), beta(3), gamma(1), delta(1), epsilon(1). CF(0) has three main subunits: a(1), b(2) and c(9-12). The alpha and beta chains form an alternating ring which encloses part of the gamma chain. CF(1) is attached to CF(0) by a central stalk formed by the gamma and epsilon chains, while a peripheral stalk is formed by the delta and b chains.

Its subcellular location is the cell membrane. Functionally, key component of the proton channel; it plays a direct role in the translocation of protons across the membrane. The chain is ATP synthase subunit a from Buchnera aphidicola subsp. Schizaphis graminum (strain Sg).